A 66-amino-acid chain; its full sequence is ATP synthase protein 8 (66 aa).

The helical transmembrane segment at 8–24 (PWPMVIMSMILTLFYIT) threads the bilayer. Lysine 54 carries the post-translational modification N6-acetyllysine; alternate. Lysine 54 bears the N6-succinyllysine; alternate mark. The residue at position 57 (lysine 57) is an N6-acetyllysine.

This sequence belongs to the ATPase protein 8 family. As to quaternary structure, F-type ATPases have 2 components, CF(1) - the catalytic core - and CF(0) - the membrane proton channel. Component of an ATP synthase complex composed of ATP5PB, ATP5MC1, ATP5F1E, ATP5PD, ATP5ME, ATP5PF, ATP5MF, MT-ATP6, MT-ATP8, ATP5F1A, ATP5F1B, ATP5F1D, ATP5F1C, ATP5PO, ATP5MG, ATP5MK and ATP5MJ. Interacts with PRICKLE3.

The protein localises to the mitochondrion membrane. Mitochondrial membrane ATP synthase (F(1)F(0) ATP synthase or Complex V) produces ATP from ADP in the presence of a proton gradient across the membrane which is generated by electron transport complexes of the respiratory chain. F-type ATPases consist of two structural domains, F(1) - containing the extramembraneous catalytic core and F(0) - containing the membrane proton channel, linked together by a central stalk and a peripheral stalk. During catalysis, ATP synthesis in the catalytic domain of F(1) is coupled via a rotary mechanism of the central stalk subunits to proton translocation. Part of the complex F(0) domain. Minor subunit located with subunit a in the membrane. The polypeptide is ATP synthase protein 8 (MT-ATP8) (Alouatta sara (Bolivian red howler monkey)).